Here is a 313-residue protein sequence, read N- to C-terminus: 2-dehydro-3-deoxygluconokinase/2-dehydro-3-deoxygalactonokinase (313 aa).

Substrate-binding positions include 34 to 38 (GSELN), Tyr-90, 106 to 108 (YYR), and Arg-166. ATP is bound by residues 164–166 (NIR), 226–231 (KLGSKG), and 255–258 (GAGD). The substrate site is built by Asp-258 and Asp-294. Asp-258 acts as the Proton acceptor in catalysis.

In terms of assembly, homohexamer; trimer of dimers.

It catalyses the reaction 2-dehydro-3-deoxy-D-gluconate + ATP = 2-dehydro-3-deoxy-6-phospho-D-gluconate + ADP + H(+). It carries out the reaction 2-dehydro-3-deoxy-D-galactonate + ATP = 2-dehydro-3-deoxy-6-phospho-D-galactonate + ADP + H(+). It functions in the pathway carbohydrate acid metabolism; 2-dehydro-3-deoxy-D-gluconate degradation; D-glyceraldehyde 3-phosphate and pyruvate from 2-dehydro-3-deoxy-D-gluconate: step 1/2. Its function is as follows. Involved in the degradation of glucose and galactose via the semi-phosphorylative Entner-Doudoroff pathway. Catalyzes the phosphorylation of 2-keto-3-deoxygluconate (KDG) and 2-keto-3-deoxygalactonate (KDGal) to produce 2-keto-3-deoxy-6-phosphogluconate (KDPG) and 2-keto-3-deoxy-6-phosphogalactonate (KDPGal), respectively. The polypeptide is 2-dehydro-3-deoxygluconokinase/2-dehydro-3-deoxygalactonokinase (kdgK) (Saccharolobus solfataricus (strain ATCC 35092 / DSM 1617 / JCM 11322 / P2) (Sulfolobus solfataricus)).